Reading from the N-terminus, the 868-residue chain is Translation initiation factor IF-2 (868 aa).

A compositionally biased stretch (basic and acidic residues) spans 103–183; the sequence is RSELPETSDR…RQAAAERETV (81 aa). A disordered region spans residues 103–274; it reads RSELPETSDR…GRPMLMPEQK (172 aa). Over residues 190–207 the composition is skewed to pro residues; the sequence is VAAPPIPRPAPEPRPPAR. Residues 213 to 254 show a composition bias toward basic and acidic residues; it reads PKAEAPRAHPAERETEARGDKRSAGLSRKDEYRELQGDDFRK. A compositionally biased stretch (basic residues) spans 255–264; that stretch reads GGGKRKKPKT. A tr-type G domain is found at 369–538; that stretch reads PRPPVVTIMG…LVQAEVLELK (170 aa). The tract at residues 378-385 is G1; sequence GHVDHGKT. 378–385 contributes to the GTP binding site; that stretch reads GHVDHGKT. The tract at residues 403 to 407 is G2; sequence GITQH. Residues 424-427 are G3; the sequence is DTPG. Residues 424–428 and 478–481 contribute to the GTP site; these read DTPGH and NKMD. The interval 478 to 481 is G4; that stretch reads NKMD. The segment at 514-516 is G5; that stretch reads SAK.

Belongs to the TRAFAC class translation factor GTPase superfamily. Classic translation factor GTPase family. IF-2 subfamily.

The protein localises to the cytoplasm. In terms of biological role, one of the essential components for the initiation of protein synthesis. Protects formylmethionyl-tRNA from spontaneous hydrolysis and promotes its binding to the 30S ribosomal subunits. Also involved in the hydrolysis of GTP during the formation of the 70S ribosomal complex. The protein is Translation initiation factor IF-2 of Methylococcus capsulatus (strain ATCC 33009 / NCIMB 11132 / Bath).